We begin with the raw amino-acid sequence, 251 residues long: Hydroxyacylglutathione hydrolase (251 aa).

Residues histidine 53, histidine 55, aspartate 57, histidine 58, histidine 110, aspartate 127, and histidine 165 each contribute to the Zn(2+) site.

Belongs to the metallo-beta-lactamase superfamily. Glyoxalase II family. In terms of assembly, monomer. Requires Zn(2+) as cofactor.

It catalyses the reaction an S-(2-hydroxyacyl)glutathione + H2O = a 2-hydroxy carboxylate + glutathione + H(+). It participates in secondary metabolite metabolism; methylglyoxal degradation; (R)-lactate from methylglyoxal: step 2/2. Thiolesterase that catalyzes the hydrolysis of S-D-lactoyl-glutathione to form glutathione and D-lactic acid. The chain is Hydroxyacylglutathione hydrolase from Salmonella typhi.